A 188-amino-acid polypeptide reads, in one-letter code: MDRERILMGVVGRPHGVRGLVRVHSYAAVPEDLTAYGALTDEHGQVWSLRWRGDGIAELRDAAGQPLSGRDAAQAMVNRRLYVARTSLPEPDQDEFYFTDLIGMDVRAQGTDAPLGRVLVVHDYGAGVSLELGGQGHAPLILPFTRACFPVVDVAAGRIEAVLPDEIEVQGDLSDKGEVEVSATGGAS.

The PRC barrel domain maps to 93 to 175 (QDEFYFTDLI…EIEVQGDLSD (83 aa)).

It belongs to the RimM family. As to quaternary structure, binds ribosomal protein uS19.

The protein localises to the cytoplasm. An accessory protein needed during the final step in the assembly of 30S ribosomal subunit, possibly for assembly of the head region. Essential for efficient processing of 16S rRNA. May be needed both before and after RbfA during the maturation of 16S rRNA. It has affinity for free ribosomal 30S subunits but not for 70S ribosomes. This chain is Ribosome maturation factor RimM, found in Gluconacetobacter diazotrophicus (strain ATCC 49037 / DSM 5601 / CCUG 37298 / CIP 103539 / LMG 7603 / PAl5).